The following is a 118-amino-acid chain: Small ribosomal subunit protein uS13 (118 aa).

Positions 94-118 (GLPVRGQRTKTNARTRKGPRKPIKK) are disordered.

This sequence belongs to the universal ribosomal protein uS13 family. In terms of assembly, part of the 30S ribosomal subunit. Forms a loose heterodimer with protein S19. Forms two bridges to the 50S subunit in the 70S ribosome.

In terms of biological role, located at the top of the head of the 30S subunit, it contacts several helices of the 16S rRNA. In the 70S ribosome it contacts the 23S rRNA (bridge B1a) and protein L5 of the 50S subunit (bridge B1b), connecting the 2 subunits; these bridges are implicated in subunit movement. Contacts the tRNAs in the A and P-sites. The polypeptide is Small ribosomal subunit protein uS13 (Edwardsiella ictaluri (strain 93-146)).